The sequence spans 252 residues: Probable ABC transporter ATP-binding protein p29 (252 aa).

The ABC transporter domain occupies 8 to 252 (LEIKNLTFKN…NILDQVFKND (245 aa)). 42 to 49 (GSSGQGKS) provides a ligand contact to ATP.

It belongs to the ABC transporter superfamily.

Its function is as follows. Part of a high-affinity transport system. The chain is Probable ABC transporter ATP-binding protein p29 from Mesomycoplasma hyorhinis (Mycoplasma hyorhinis).